The primary structure comprises 283 residues: Release factor glutamine methyltransferase (283 aa).

Residues 120-124 (GTGSG), Asp-143, Phe-172, and Asn-187 each bind S-adenosyl-L-methionine. 187–190 (NPPY) serves as a coordination point for substrate.

It belongs to the protein N5-glutamine methyltransferase family. PrmC subfamily.

It carries out the reaction L-glutaminyl-[peptide chain release factor] + S-adenosyl-L-methionine = N(5)-methyl-L-glutaminyl-[peptide chain release factor] + S-adenosyl-L-homocysteine + H(+). Its function is as follows. Methylates the class 1 translation termination release factors RF1/PrfA and RF2/PrfB on the glutamine residue of the universally conserved GGQ motif. This chain is Release factor glutamine methyltransferase, found in Moorella thermoacetica (strain ATCC 39073 / JCM 9320).